A 335-amino-acid polypeptide reads, in one-letter code: MQVLVNKIWYEGHPLRWLLLPFSVLFALITAIRRSLFRLGLKSQTPLPVPVIVVGNITVGGSGKTPTVIYLIELLRQQGFNPGVISRGYGADIQGVKVVTAADSAASVGDEPAMIVARTGVPMVVGAKRVDTAKALLAQFAVDVIICDDGLQHYALGRDIELVVIDGKRGLGNRHLLPAGPLREGAWRLNQVDFVVVNGGPAQANQYEMQLSPSAVLPVNPKAVAVFDPTQPVVAMAGIGHPARFFETLTQQGFQLALSHGFDDHQAYDKEVLCELAASRPLMMTEKDAVKCRDFAQENWWYLAVDAKLSPQFDQQLLSRVRSVAAAKQGKSHGV.

58–65 (TVGGSGKT) is a binding site for ATP.

It belongs to the LpxK family.

The enzyme catalyses a lipid A disaccharide + ATP = a lipid IVA + ADP + H(+). The protein operates within glycolipid biosynthesis; lipid IV(A) biosynthesis; lipid IV(A) from (3R)-3-hydroxytetradecanoyl-[acyl-carrier-protein] and UDP-N-acetyl-alpha-D-glucosamine: step 6/6. Transfers the gamma-phosphate of ATP to the 4'-position of a tetraacyldisaccharide 1-phosphate intermediate (termed DS-1-P) to form tetraacyldisaccharide 1,4'-bis-phosphate (lipid IVA). The chain is Tetraacyldisaccharide 4'-kinase from Shewanella sp. (strain MR-7).